Here is a 319-residue protein sequence, read N- to C-terminus: Acetyl esterase (319 aa).

The Involved in the stabilization of the negatively charged intermediate by the formation of the oxyanion hole motif lies at 91-93 (HGG). Residues Ser-165, Asp-262, and His-292 contribute to the active site.

It belongs to the 'GDXG' lipolytic enzyme family. As to quaternary structure, homodimer. Interacts with MalT and MelA.

The protein resides in the cytoplasm. Functionally, displays esterase activity towards short chain fatty esters (acyl chain length of up to 8 carbons). Able to hydrolyze triacetylglycerol (triacetin) and tributyrylglycerol (tributyrin), but not trioleylglycerol (triolein) or cholesterol oleate. Negatively regulates MalT activity by antagonizing maltotriose binding. Inhibits MelA galactosidase activity. The polypeptide is Acetyl esterase (Escherichia coli O157:H7).